Here is a 291-residue protein sequence, read N- to C-terminus: ATP synthase gamma chain (291 aa).

Belongs to the ATPase gamma chain family. In terms of assembly, F-type ATPases have 2 components, CF(1) - the catalytic core - and CF(0) - the membrane proton channel. CF(1) has five subunits: alpha(3), beta(3), gamma(1), delta(1), epsilon(1). CF(0) has three main subunits: a, b and c.

The protein localises to the cell inner membrane. In terms of biological role, produces ATP from ADP in the presence of a proton gradient across the membrane. The gamma chain is believed to be important in regulating ATPase activity and the flow of protons through the CF(0) complex. The sequence is that of ATP synthase gamma chain from Neisseria meningitidis serogroup A / serotype 4A (strain DSM 15465 / Z2491).